The following is a 206-amino-acid chain: Ribosomal RNA small subunit methyltransferase G (206 aa).

S-adenosyl-L-methionine-binding positions include G73, L78, 124-125 (VE), and R139.

Belongs to the methyltransferase superfamily. RNA methyltransferase RsmG family.

The protein resides in the cytoplasm. It carries out the reaction guanosine(527) in 16S rRNA + S-adenosyl-L-methionine = N(7)-methylguanosine(527) in 16S rRNA + S-adenosyl-L-homocysteine. Specifically methylates the N7 position of guanine in position 527 of 16S rRNA. The polypeptide is Ribosomal RNA small subunit methyltransferase G (Pectobacterium atrosepticum (strain SCRI 1043 / ATCC BAA-672) (Erwinia carotovora subsp. atroseptica)).